A 126-amino-acid chain; its full sequence is Large ribosomal subunit protein bL12 (126 aa).

It belongs to the bacterial ribosomal protein bL12 family. Homodimer. Part of the ribosomal stalk of the 50S ribosomal subunit. Forms a multimeric L10(L12)X complex, where L10 forms an elongated spine to which 2 to 4 L12 dimers bind in a sequential fashion. Binds GTP-bound translation factors.

Forms part of the ribosomal stalk which helps the ribosome interact with GTP-bound translation factors. Is thus essential for accurate translation. The sequence is that of Large ribosomal subunit protein bL12 from Chlorobium phaeobacteroides (strain BS1).